We begin with the raw amino-acid sequence, 244 residues long: Coenzyme Q-binding protein COQ10 homolog B, mitochondrial (244 aa).

It belongs to the COQ10 family. As to quaternary structure, interacts with coenzyme Q.

It localises to the mitochondrion inner membrane. Required for the function of coenzyme Q in the respiratory chain. May serve as a chaperone or may be involved in the transport of Q6 from its site of synthesis to the catalytic sites of the respiratory complexes. This is Coenzyme Q-binding protein COQ10 homolog B, mitochondrial (coq10b) from Xenopus laevis (African clawed frog).